Consider the following 299-residue polypeptide: Ectoine dioxygenase (299 aa).

Residues 1–40 (MTTTTTNVTDLYPTRGATEVATPRQDPVVWGSPDAPGPVS) are disordered. Glutamine 133 provides a ligand contact to L-ectoine. 2-oxoglutarate is bound at residue lysine 139. Fe cation is bound by residues histidine 150, aspartate 152, and histidine 251.

This sequence belongs to the PhyH family. EctD subfamily. As to quaternary structure, homodimer. It depends on Fe(2+) as a cofactor.

The enzyme catalyses L-ectoine + 2-oxoglutarate + O2 = 5-hydroxyectoine + succinate + CO2. Functionally, involved in the biosynthesis of 5-hydroxyectoine, called compatible solute, which helps organisms to survive extreme osmotic stress by acting as a highly soluble organic osmolyte. Catalyzes the 2-oxoglutarate-dependent selective hydroxylation of L-ectoine to yield (4S,5S)-5-hydroxyectoine. This chain is Ectoine dioxygenase, found in Streptomyces coelicolor (strain ATCC BAA-471 / A3(2) / M145).